A 948-amino-acid chain; its full sequence is Insulin receptor substrate 1 (948 aa).

The PH domain occupies 8–109; sequence GMALSGYLKK…WLDKLLVLQR (102 aa). The IRS-type PTB domain maps to 122 to 236; it reads YDQVWQVVIQ…SAMSAKTESN (115 aa). The tract at residues 247 to 270 is disordered; it reads PDLSHEPMRKRSSSANEASKPINV. Phosphoserine is present on residues S286 and S287. Residues 304-329 show a composition bias toward polar residues; that stretch reads RNGTLSESSNQTYFGSNHGLRSNTIS. A disordered region spans residues 304-373; sequence RNGTLSESSN…SDDNGSFSHY (70 aa). The residue at position 342 (S342) is a Phosphoserine. The residue at position 410 (Y410) is a Phosphotyrosine; by INSR. A YXXM motif 1 motif is present at residues 410–413; that stretch reads YIPM. Residues 528 to 559 form a disordered region; the sequence is ANRSQSSITKEGTSYSTSSNRQKKSTSAPLLS. Residues 529–556 show a composition bias toward polar residues; that stretch reads NRSQSSITKEGTSYSTSSNRQKKSTSAP. S554 carries the phosphoserine modification. A YXXM motif 2 motif is present at residues 640–643; sequence YLEM. The tract at residues 703–734 is disordered; sequence EKKSNSPLNETPCSLKPTDVESNSHDEHSTNN. The span at 720-731 shows a compositional bias: basic and acidic residues; sequence TDVESNSHDEHS. Y891 is subject to Phosphotyrosine; by INSR. Residues 907–948 are disordered; the sequence is YLKRGSRESPPVSACPGDGNTYAKIDFDQSDSSSSSSNIFNT. S912 and S915 each carry phosphoserine. Y928 is modified (phosphotyrosine; by INSR). Residues 936-948 are compositionally biased toward low complexity; that stretch reads SDSSSSSSNIFNT.

Bindings to phosphatidylinositol 3-kinase and SHP2.

Its function is as follows. Activates phosphatidylinositol 3-kinase when bound to the regulatory p85 subunit. May mediate the control of various cellular processes by insulin-like peptides. When phosphorylated by the insulin receptor binds specifically to various cellular proteins containing SH2 domains. Involved in control of cell proliferation, cell size, and body and organ growth throughout development. Also has a role in a signaling pathway controlling the physiological response required to endure periods of low nutrient conditions. Insulin/insulin-like growth factor (IGF) signaling pathway has a role in regulating aging and is necessary in the ovary for vitellogenic maturation. This Drosophila erecta (Fruit fly) protein is Insulin receptor substrate 1.